Here is a 422-residue protein sequence, read N- to C-terminus: Mannose-1-phosphate guanylyltransferase regulatory subunit alpha-A (422 aa).

Residues 2–253 form a substrate-binding domain region; the sequence is LKAVILIGGP…DRFWSQIKSA (252 aa). E85 and Q249 together coordinate GDP-alpha-D-mannose. Residues 275–422 are hexapeptide repeat domain; it reads LATNTEGGAK…NRSFKNQIIL (148 aa). The tract at residues 358–386 is C-loop; the sequence is TPSDPNPNDPYAKIDSETLFRDGKLTPSI.

This sequence belongs to the transferase hexapeptide repeat family. Component of the GMPPA-GMPPB mannose-1-phosphate guanylyltransferase complex composed of 4 gmppa subunits and 8 gmppb subunits; the complex is organized into three layers, a central layer made up of 2 gmppa dimers sandwiched between two layers each made up of 2 gmppb dimers.

Its pathway is nucleotide-sugar biosynthesis; GDP-alpha-D-mannose biosynthesis; GDP-alpha-D-mannose from alpha-D-mannose 1-phosphate (GTP route): step 1/1. Functionally, regulatory subunit of the GMPPA-GMPPB mannose-1-phosphate guanylyltransferase complex; reduces the catalytic activity of GMPPB when part of the complex. Mediates allosteric feedback inhibition of GMPPB catalytic activity upon binding GDP-alpha-D-mannose. Together with GMPPB regulates GDP-alpha-D-mannose levels. One of two paralogs (gmppaa and gmppab) that may have redundant functions. In Danio rerio (Zebrafish), this protein is Mannose-1-phosphate guanylyltransferase regulatory subunit alpha-A (gmppaa).